Reading from the N-terminus, the 263-residue chain is MRQSKKLGQCFLKDKNFVKKAINRAEITNKDVVLELGLGEGALTKELAKIAKKVYVIELDERLKPFADEITSEFENVEIIWSDALKVDLKNLGFNKIVANLPYQISSPITFKFLDVDFETAVLMYQYEFAKRMAGKPDTKEYSRLSVAVQYNADVEFICKVPPSAFSPKPDVNSAIVKLTKREPKYFVKDEKFFKKVLKAMFQHRNRTIKRALIDSSHEIEIDRDNLKEILEKVESEFDFSERVFKTSPEKIGYLSNLLYDEI.

S-adenosyl-L-methionine is bound by residues Leu-12, Gly-37, Glu-58, Asp-83, and Asn-100.

The protein belongs to the class I-like SAM-binding methyltransferase superfamily. rRNA adenine N(6)-methyltransferase family. RsmA subfamily.

It is found in the cytoplasm. In terms of biological role, specifically dimethylates two adjacent adenosines in the loop of a conserved hairpin near the 3'-end of 16S rRNA in the 30S particle. May play a critical role in biogenesis of 30S subunits. The sequence is that of Probable ribosomal RNA small subunit methyltransferase A from Methanococcus maripaludis (strain C5 / ATCC BAA-1333).